Here is a 453-residue protein sequence, read N- to C-terminus: Probable glycine dehydrogenase (decarboxylating) subunit 1 (453 aa).

The protein belongs to the GcvP family. N-terminal subunit subfamily. In terms of assembly, the glycine cleavage system is composed of four proteins: P, T, L and H. In this organism, the P 'protein' is a heterodimer of two subunits.

It catalyses the reaction N(6)-[(R)-lipoyl]-L-lysyl-[glycine-cleavage complex H protein] + glycine + H(+) = N(6)-[(R)-S(8)-aminomethyldihydrolipoyl]-L-lysyl-[glycine-cleavage complex H protein] + CO2. Functionally, the glycine cleavage system catalyzes the degradation of glycine. The P protein binds the alpha-amino group of glycine through its pyridoxal phosphate cofactor; CO(2) is released and the remaining methylamine moiety is then transferred to the lipoamide cofactor of the H protein. The polypeptide is Probable glycine dehydrogenase (decarboxylating) subunit 1 (Methylococcus capsulatus (strain ATCC 33009 / NCIMB 11132 / Bath)).